The chain runs to 565 residues: Arginine--tRNA ligase (565 aa).

Positions 126-136 match the 'HIGH' region motif; it reads ANPTGPLHIGH.

It belongs to the class-I aminoacyl-tRNA synthetase family. Monomer.

It localises to the cytoplasm. It catalyses the reaction tRNA(Arg) + L-arginine + ATP = L-arginyl-tRNA(Arg) + AMP + diphosphate. The polypeptide is Arginine--tRNA ligase (Wolbachia sp. subsp. Brugia malayi (strain TRS)).